The sequence spans 668 residues: Cyclin-dependent kinase 11.2 (668 aa).

Residues 1-265 (MSNYSTNGSR…EQWESMTENE (265 aa)) form a disordered region. Basic and acidic residues-rich tracts occupy residues 35 to 73 (KTKE…DHRD), 85 to 127 (YCRD…DSLR), and 140 to 163 (LPDD…KTVM). Residues 164-181 (EVEDVEMSPVEMLDEEEV) are compositionally biased toward acidic residues. Composition is skewed to basic and acidic residues over residues 197–212 (NEPE…DPES) and 245–265 (PDDK…TENE). The Protein kinase domain occupies 304 to 600 (YVILNVIAEG…ASEALQHDWF (297 aa)). ATP-binding positions include 310-318 (IAEGTYGEV) and Lys-333. Asp-432 functions as the Proton acceptor in the catalytic mechanism.

It belongs to the protein kinase superfamily. CMGC Ser/Thr protein kinase family. CDC2/CDKX subfamily. As to expression, expressed in somatic cells and at varying levels throughout the germline (at protein level). Highly expressed in the germ line of hermaphrodites (at protein level).

The protein localises to the nucleus. The protein resides in the cytoplasm. It carries out the reaction L-seryl-[protein] + ATP = O-phospho-L-seryl-[protein] + ADP + H(+). The enzyme catalyses L-threonyl-[protein] + ATP = O-phospho-L-threonyl-[protein] + ADP + H(+). Probable cyclin-dependent kinase whose activity is most likely regulated by the cyclin cyl-1/Cylin-L. Acts partially redundantly with cdk-11.1 to ensure embryonic viability. In contrast to cdk-11.1, not essential for male and female fertility. In Caenorhabditis elegans, this protein is Cyclin-dependent kinase 11.2.